A 171-amino-acid chain; its full sequence is Calcium-binding allergen Ole e 8 (171 aa).

EF-hand domains are found at residues 16-51 (QEPN…LGSN), 52-87 (TSKE…ETDP), 92-127 (GGEN…LGER), and 128-163 (YAEH…KSGN). Positions 29, 31, 33, 35, 40, 65, 67, 69, 76, 105, 107, 109, 116, 141, 143, 145, 147, and 152 each coordinate Ca(2+).

As to quaternary structure, homodimer. Expressed in pollen.

The polypeptide is Calcium-binding allergen Ole e 8 (Olea europaea (Common olive)).